Reading from the N-terminus, the 184-residue chain is Gremlin-1 (184 aa).

A signal peptide spans 1–24; it reads MVRTLYAIGAVFLLTGFLLPTAEG. Residues 24-77 form a disordered region; that stretch reads GRKRNRGSQGAIPPPDKDQPNDSEQMQTQQQSGSRHRERGKGTSMPAEEVLESS. N-linked (GlcNAc...) asparagine glycosylation occurs at N44. Over residues 45-56 the composition is skewed to polar residues; that stretch reads DSEQMQTQQQSG. Cystine bridges form between C94–C144, C108–C158, C118–C176, and C122–C178. Residues 94–184 enclose the CTCK domain; sequence CKTQPLKQTI…ECRCISIDLD (91 aa).

The protein belongs to the DAN family.

The protein localises to the secreted. Cytokine that may play a role in the development of the medial pallium and during optic nerve and pecten development by modulating BMP signaling. The protein is Gremlin-1 (GREM1) of Gallus gallus (Chicken).